The chain runs to 494 residues: MNAPVKPSNLIKGATGDWEMVIGLEVHAQVTSNAKLFSGASTAFGGEPNSHVSLVDAAMPGMLPVINEECVRQAVRTGLGLNAQINLRSVFDRKNYFYPDLPQGYQISQYKSPIVGEGEIVVDLADGASIAVGIERLHLEQDAGKSLHDQHADMSAIDLNRSGVALMEIVSKPDLRSSEQAKAYVTKLRTILRYLGTCDGDMEKGSLRADVNVSVRRPGAALGTRCEIKNVNSIRFIGQAIEHEARRQIGILEDGGSIDQETRLFDPDKGETRAMRSKEEAHDYRYFPDPDLLPLEFSQGFVEALKADLPELPDQKKTRFIGDFGLTPYDAAVLVGEHESANFYEAVLAGLANGRRDGKLAANWVINELFGRLNKESRGIAASPVSASQLAAIVDLIGEETISGKIAKDLFEIVWTEGGDPRTLVEARGMKQVTDMGAIEKAVDDIVAANPDKAAQVRAKPQMIGWFVGQVMKASGGKANPQAVNDLLKTKLGL.

This sequence belongs to the GatB/GatE family. GatB subfamily. In terms of assembly, heterotrimer of A, B and C subunits.

The enzyme catalyses L-glutamyl-tRNA(Gln) + L-glutamine + ATP + H2O = L-glutaminyl-tRNA(Gln) + L-glutamate + ADP + phosphate + H(+). It catalyses the reaction L-aspartyl-tRNA(Asn) + L-glutamine + ATP + H2O = L-asparaginyl-tRNA(Asn) + L-glutamate + ADP + phosphate + 2 H(+). Functionally, allows the formation of correctly charged Asn-tRNA(Asn) or Gln-tRNA(Gln) through the transamidation of misacylated Asp-tRNA(Asn) or Glu-tRNA(Gln) in organisms which lack either or both of asparaginyl-tRNA or glutaminyl-tRNA synthetases. The reaction takes place in the presence of glutamine and ATP through an activated phospho-Asp-tRNA(Asn) or phospho-Glu-tRNA(Gln). This chain is Aspartyl/glutamyl-tRNA(Asn/Gln) amidotransferase subunit B, found in Nitrobacter hamburgensis (strain DSM 10229 / NCIMB 13809 / X14).